We begin with the raw amino-acid sequence, 390 residues long: uncharacterized protein (390 aa).

The protein belongs to the glycosyltransferase group 1 family. Glycosyltransferase 4 subfamily.

This is an uncharacterized protein from Methanocaldococcus jannaschii (strain ATCC 43067 / DSM 2661 / JAL-1 / JCM 10045 / NBRC 100440) (Methanococcus jannaschii).